The chain runs to 107 residues: Integration host factor subunit alpha (107 aa).

The protein belongs to the bacterial histone-like protein family. As to quaternary structure, heterodimer of an alpha and a beta chain.

In terms of biological role, this protein is one of the two subunits of integration host factor, a specific DNA-binding protein that functions in genetic recombination as well as in transcriptional and translational control. This is Integration host factor subunit alpha from Brucella suis (strain ATCC 23445 / NCTC 10510).